A 591-amino-acid polypeptide reads, in one-letter code: V-type ATP synthase alpha chain (591 aa).

Position 233 to 240 (233 to 240) interacts with ATP; the sequence is GPFGAGKT.

Belongs to the ATPase alpha/beta chains family.

It catalyses the reaction ATP + H2O + 4 H(+)(in) = ADP + phosphate + 5 H(+)(out). Its function is as follows. Produces ATP from ADP in the presence of a proton gradient across the membrane. The V-type alpha chain is a catalytic subunit. The polypeptide is V-type ATP synthase alpha chain (Streptococcus pyogenes serotype M49 (strain NZ131)).